Here is a 564-residue protein sequence, read N- to C-terminus: Dihydroxy-acid dehydratase (564 aa).

Basic residues predominate over residues 1–10 (MTDTRTKRRM). The tract at residues 1–23 (MTDTRTKRRMNWNSHHITQGDER) is disordered. Residue Cys-57 coordinates [2Fe-2S] cluster. Asp-89 is a Mg(2+) binding site. Position 130 (Cys-130) interacts with [2Fe-2S] cluster. Mg(2+)-binding residues include Asp-131 and Lys-132. N6-carboxylysine is present on Lys-132. Cys-202 contributes to the [2Fe-2S] cluster binding site. Residue Glu-454 participates in Mg(2+) binding. The active-site Proton acceptor is the Ser-480.

The protein belongs to the IlvD/Edd family. Homodimer. The cofactor is [2Fe-2S] cluster. Mg(2+) is required as a cofactor.

It carries out the reaction (2R)-2,3-dihydroxy-3-methylbutanoate = 3-methyl-2-oxobutanoate + H2O. The catalysed reaction is (2R,3R)-2,3-dihydroxy-3-methylpentanoate = (S)-3-methyl-2-oxopentanoate + H2O. It functions in the pathway amino-acid biosynthesis; L-isoleucine biosynthesis; L-isoleucine from 2-oxobutanoate: step 3/4. It participates in amino-acid biosynthesis; L-valine biosynthesis; L-valine from pyruvate: step 3/4. In terms of biological role, functions in the biosynthesis of branched-chain amino acids. Catalyzes the dehydration of (2R,3R)-2,3-dihydroxy-3-methylpentanoate (2,3-dihydroxy-3-methylvalerate) into 2-oxo-3-methylpentanoate (2-oxo-3-methylvalerate) and of (2R)-2,3-dihydroxy-3-methylbutanoate (2,3-dihydroxyisovalerate) into 2-oxo-3-methylbutanoate (2-oxoisovalerate), the penultimate precursor to L-isoleucine and L-valine, respectively. This is Dihydroxy-acid dehydratase from Deinococcus geothermalis (strain DSM 11300 / CIP 105573 / AG-3a).